The following is a 192-amino-acid chain: Riboflavin kinase (192 aa).

Positions 47 and 49 each coordinate Mg(2+). E129 serves as the catalytic Nucleophile.

It belongs to the flavokinase family. It depends on Zn(2+) as a cofactor. The cofactor is Mg(2+).

It catalyses the reaction riboflavin + ATP = FMN + ADP + H(+). Its pathway is cofactor biosynthesis; FMN biosynthesis; FMN from riboflavin (ATP route): step 1/1. Its function is as follows. Catalyzes the phosphorylation of riboflavin (vitamin B2) to form flavin mononucleotide (FMN) coenzyme. The protein is Riboflavin kinase (FMN1) of Yarrowia lipolytica (strain CLIB 122 / E 150) (Yeast).